The following is an 827-amino-acid chain: MNLSRRDFMKANAALAAASVAGLIIPVKNVNAADTSITWDKAVCRFCGTGCAVLVGTKDGRVVASQGDPDAEVNRGLNCIKGYFLPKIMYGKDRLTHPMLRMKNGQYDKEGEFTPVTWDFAFKTMAEKFKSALKAKGPNGVGMFTSGQSTIFEGVAKSKLFKAGLLSNNIDPNARHCMASAAVAFVRTFGIDEPMGCYDDIEHADAFVLWGSNMAEMHPILWSRISDRRLANPDTVSVNVLSTFEHRSFELADLGILLKPQSDLAILNYIANYLIENNAINREFIEKHTKFKRGETDIGYGLRPQDPREQTAKNVKTAGKMYDSSFEEFKKLVAPYTLEKAHEISGVPKEQLEKLAKLYADPNKKVVSYWTMGINQHTRGVWANHLIYNIHLLTGKISLPGCGPFSLTGQPSACGTAREVGTFIHRLPADLVVIKPEHRKIAEKIWKLPEGLISDKLGFHAVAQSRALKDGKMQVLWQMCNNNMQAGPNINEETYPGWRNPDNFIVVSDPYPTVSALSADLILPTAMWVEKEGAYGNAERRTQFWRQQVKAPGEAKSDLWQLVEFSKYFTTDEVWPAEILAKNPAYQGKTLYEVLYLNGQVNQYSNDELKGRLNDEAYHFGFYIQKGLFEEYASFGRGHGHDLADFDTYHKARGLRWPVVDGKETLWRYREGYDPYVKAGEGVSFYGQADKRAVILAVPYEPPAEVPDRKYDLWLTTGRILEHWHTGSMTRRVPELHRSFPNNLVWMNPNDAKKRGLKHGDKIKVISRRGEITSYIDTRGRNKCPEGLIYTTFFDAGQLANKLILDATDPISKETDFKKCAVKVVKA.

The segment at residues methionine 1–alanine 32 is a signal peptide (tat-type signal). The 57-residue stretch at isoleucine 37–aspartate 93 folds into the 4Fe-4S Mo/W bis-MGD-type domain. [4Fe-4S] cluster is bound by residues cysteine 44, cysteine 47, cysteine 51, and cysteine 79. Residues lysine 81, glutamine 148, asparagine 173, cysteine 177, tryptophan 210–methionine 217, serine 242–histidine 246, glutamine 261–aspartate 263, methionine 372, glutamine 376, asparagine 482, serine 508–aspartate 509, lysine 531, aspartate 558, and threonine 717–threonine 726 each bind Mo-bis(molybdopterin guanine dinucleotide). Residue phenylalanine 793 participates in substrate binding. Residues asparagine 801 and lysine 818 each contribute to the Mo-bis(molybdopterin guanine dinucleotide) site.

It belongs to the prokaryotic molybdopterin-containing oxidoreductase family. NasA/NapA/NarB subfamily. In terms of assembly, component of the periplasmic nitrate reductase NapAB complex composed of NapA and NapB. The cofactor is [4Fe-4S] cluster. It depends on Mo-bis(molybdopterin guanine dinucleotide) as a cofactor. In terms of processing, predicted to be exported by the Tat system. The position of the signal peptide cleavage has not been experimentally proven.

The protein resides in the periplasm. The catalysed reaction is 2 Fe(II)-[cytochrome] + nitrate + 2 H(+) = 2 Fe(III)-[cytochrome] + nitrite + H2O. Functionally, catalytic subunit of the periplasmic nitrate reductase complex NapAB. Receives electrons from NapB and catalyzes the reduction of nitrate to nitrite. In Histophilus somni (strain 2336) (Haemophilus somnus), this protein is Periplasmic nitrate reductase.